The primary structure comprises 196 residues: Imidazoleglycerol-phosphate dehydratase (196 aa).

This sequence belongs to the imidazoleglycerol-phosphate dehydratase family.

The protein localises to the cytoplasm. It carries out the reaction D-erythro-1-(imidazol-4-yl)glycerol 3-phosphate = 3-(imidazol-4-yl)-2-oxopropyl phosphate + H2O. Its pathway is amino-acid biosynthesis; L-histidine biosynthesis; L-histidine from 5-phospho-alpha-D-ribose 1-diphosphate: step 6/9. The protein is Imidazoleglycerol-phosphate dehydratase of Ralstonia pickettii (strain 12J).